A 131-amino-acid chain; its full sequence is Spermatocyte protein spe-27 (131 aa).

Residues 1 to 17 (MNKSLIFLLSFAYSCYS) form the signal peptide.

Functionally, required for spermiogenesis. The polypeptide is Spermatocyte protein spe-27 (spe-27) (Caenorhabditis elegans).